Here is a 931-residue protein sequence, read N- to C-terminus: Isoleucine--tRNA ligase (931 aa).

The 'HIGH' region signature appears at 57-67; the sequence is PFANGNIHMGH. Glu556 lines the L-isoleucyl-5'-AMP pocket. A 'KMSKS' region motif is present at residues 597-601; the sequence is KMSKS. Lys600 serves as a coordination point for ATP. Zn(2+)-binding residues include Cys890, Cys893, Cys910, and Cys913.

This sequence belongs to the class-I aminoacyl-tRNA synthetase family. IleS type 1 subfamily. In terms of assembly, monomer. Zn(2+) serves as cofactor.

It localises to the cytoplasm. The catalysed reaction is tRNA(Ile) + L-isoleucine + ATP = L-isoleucyl-tRNA(Ile) + AMP + diphosphate. Its function is as follows. Catalyzes the attachment of isoleucine to tRNA(Ile). As IleRS can inadvertently accommodate and process structurally similar amino acids such as valine, to avoid such errors it has two additional distinct tRNA(Ile)-dependent editing activities. One activity is designated as 'pretransfer' editing and involves the hydrolysis of activated Val-AMP. The other activity is designated 'posttransfer' editing and involves deacylation of mischarged Val-tRNA(Ile). The chain is Isoleucine--tRNA ligase from Lactobacillus delbrueckii subsp. bulgaricus (strain ATCC BAA-365 / Lb-18).